The sequence spans 75 residues: MLLVLAIKTLVLGLCMLPISAAALGVGILFAGYNIAVSRNPDEAETIFNGTLMGFALVETFVFMSFFFGVIVYFI.

2 helical membrane passes run leucine 10–phenylalanine 30 and phenylalanine 55–isoleucine 75.

The protein belongs to the ATPase C chain family. In terms of assembly, F-type ATPases have 2 components, CF(1) - the catalytic core - and CF(0) - the membrane proton channel. CF(1) has five subunits: alpha(3), beta(3), gamma(1), delta(1), epsilon(1). CF(0) has three main subunits: a, b and c.

It localises to the mitochondrion membrane. In terms of biological role, mitochondrial membrane ATP synthase (F(1)F(0) ATP synthase or Complex V) produces ATP from ADP in the presence of a proton gradient across the membrane which is generated by electron transport complexes of the respiratory chain. F-type ATPases consist of two structural domains, F(1) - containing the extramembraneous catalytic core and F(0) - containing the membrane proton channel, linked together by a central stalk and a peripheral stalk. During catalysis, ATP synthesis in the catalytic domain of F(1) is coupled via a rotary mechanism of the central stalk subunits to proton translocation. Part of the complex F(0) domain. A homomeric c-ring of probably 10 subunits is part of the complex rotary element. In Paramecium tetraurelia, this protein is ATP synthase subunit 9, mitochondrial (ATP9).